A 761-amino-acid chain; its full sequence is RNA-binding protein mde7 (761 aa).

Polar residues-rich tracts occupy residues proline 31–leucine 46, serine 58–phenylalanine 83, and serine 99–glutamate 110. Disordered stretches follow at residues proline 31–glutamate 110 and histidine 188–asparagine 213. Residues histidine 188–valine 197 show a composition bias toward basic and acidic residues. Residues serine 199–alanine 211 are compositionally biased toward low complexity. The RRM 1 domain maps to isoleucine 223 to glutamine 289. A compositionally biased stretch (polar residues) spans glutamate 442 to asparagine 466. Residues glutamate 442–isoleucine 468 are disordered. One can recognise an RRM 2 domain in the interval asparagine 602–asparagine 679.

In Schizosaccharomyces pombe (strain 972 / ATCC 24843) (Fission yeast), this protein is RNA-binding protein mde7 (mde7).